Reading from the N-terminus, the 120-residue chain is NAD(P)H-quinone oxidoreductase subunit 3, chloroplastic (120 aa).

3 consecutive transmembrane segments (helical) span residues 10–30 (FWFF…TSKL), 64–84 (MFAL…PWAM), and 89–109 (LGVY…IGLV).

This sequence belongs to the complex I subunit 3 family. NDH is composed of at least 16 different subunits, 5 of which are encoded in the nucleus.

Its subcellular location is the plastid. It localises to the chloroplast thylakoid membrane. It catalyses the reaction a plastoquinone + NADH + (n+1) H(+)(in) = a plastoquinol + NAD(+) + n H(+)(out). The catalysed reaction is a plastoquinone + NADPH + (n+1) H(+)(in) = a plastoquinol + NADP(+) + n H(+)(out). Functionally, NDH shuttles electrons from NAD(P)H:plastoquinone, via FMN and iron-sulfur (Fe-S) centers, to quinones in the photosynthetic chain and possibly in a chloroplast respiratory chain. The immediate electron acceptor for the enzyme in this species is believed to be plastoquinone. Couples the redox reaction to proton translocation, and thus conserves the redox energy in a proton gradient. The polypeptide is NAD(P)H-quinone oxidoreductase subunit 3, chloroplastic (Chaetosphaeridium globosum (Charophycean green alga)).